Consider the following 242-residue polypeptide: Dickkopf-like protein 1 (242 aa).

The N-terminal stretch at 1–30 (MGEASPPAPARRHLLVLLLLLSTLVIPSAA) is a signal peptide. 2 N-linked (GlcNAc...) asparagine glycosylation sites follow: Asn97 and Asn112.

In terms of assembly, interacts with SLXL1; Co-localize in seminiferous tubules. Interacts with SLY. Post-translationally, N-glycosylated during spermatogenesis. Not N-glycosylated in mature sperm. In terms of tissue distribution, more highly expressed in adult testis than in fetal testis. Exclusively expressed in the testis (at protein level). Intense expression in stages II, III and IV of spermatogenesis, whereas expression is lower in stage I.

The protein resides in the secreted. It is found in the cytoplasmic vesicle. Its subcellular location is the secretory vesicle. The protein localises to the acrosome. Involved in fertilization by facilitating sperm penetration of the zona pellucida. May promote spermatocyte apoptosis, thereby limiting sperm production. In adults, may reduce testosterone synthesis in Leydig cells. Is not essential either for development or fertility. In Homo sapiens (Human), this protein is Dickkopf-like protein 1.